A 275-amino-acid polypeptide reads, in one-letter code: 1-deoxy-11-beta-hydroxypentalenate dehydrogenase (275 aa).

12-36 (GAASGIGLALSARFARAGAGVVMAD) is an NAD(+) binding site. Ser144 lines the substrate pocket. Catalysis depends on Tyr157, which acts as the Proton acceptor. Residue Lys161 participates in NAD(+) binding.

This sequence belongs to the short-chain dehydrogenases/reductases (SDR) family.

The catalysed reaction is 1-deoxy-11beta-hydroxypentalenate + NAD(+) = 1-deoxy-11-oxopentalenate + NADH + H(+). It participates in antibiotic biosynthesis; pentalenolactone biosynthesis. Functionally, catalyzes the oxidation of 1-deoxy-11-beta-hydroxypentalenic acid to 1-deoxy-11-oxopentalenic acid in the biosynthesis of pentalenolactone antibiotic. The polypeptide is 1-deoxy-11-beta-hydroxypentalenate dehydrogenase (penF) (Streptomyces exfoliatus (Streptomyces hydrogenans)).